The following is a 397-amino-acid chain: Serpin B10 (397 aa).

Positions 74–77 (KKRK) match the Nuclear localization signal motif.

The protein belongs to the serpin family. Ov-serpin subfamily.

The protein localises to the nucleus. It is found in the cytoplasm. Protease inhibitor that may play a role in the regulation of protease activities during hematopoiesis and apoptosis induced by TNF. May regulate protease activities in the cytoplasm and in the nucleus. This Otolemur garnettii (Small-eared galago) protein is Serpin B10 (SERPINB10).